The following is a 973-amino-acid chain: Nuclear factor NF-kappa-B p105 subunit (973 aa).

The 208-residue stretch at 38–245 folds into the RHD domain; the sequence is ADGPYLQILE…DAIYDSKAPN (208 aa). Cys60 is modified (S-nitrosocysteine; alternate). Cys60 carries S-(15-deoxy-Delta12,14-prostaglandin J2-9-yl)cysteine; alternate lipidation. A Glycyl lysine isopeptide (Lys-Gly) (interchain with G-Cter in SUMO2) cross-link involves residue Lys324. Ser336 bears the Phosphoserine mark. The short motif at 359–364 is the Nuclear localization signal element; that stretch reads QRKRQK. Residues 371–394 form a GRR region; sequence DSFGGGSGAGAGGGGMFGSGGGGG. The disordered stretch occupies residues 434 to 467; that stretch reads TINTKFKNEPRDCAKSDDREILNPPEKETQGEGP. The interaction with CFLAR stretch occupies residues 435-973; the sequence is INTKFKNEPR…GQDGPIEGKI (539 aa). Basic and acidic residues predominate over residues 439–463; it reads FKNEPRDCAKSDDREILNPPEKETQ. The residue at position 440 (Lys440) is an N6-acetyllysine. Ser449 carries the phosphoserine modification. 6 ANK repeats span residues 540-570, 579-608, 612-641, 648-677, 682-711, and 716-745; these read NGDS…SISD, LYQT…DLSL, WGNS…AALL, EGLN…EVNA, SGRT…ALVD, and DGTT…DPLV. Residues 648–682 form an essential for interaction with HIF1AN region; it reads EGLNAIHIAVMSNSLSCLQLLVAAGAEVNAQEQKS. A (3S)-3-hydroxyasparagine; by HIF1AN modification is found at Asn676. Ser757 is subject to Phosphoserine. One copy of the ANK 7 repeat lies at 769–799; sequence PGTTPLDMAANWQVFDILNGKPYEPVFTSDD. Positions 803 to 890 constitute a Death domain; the sequence is QGDIKQLTED…EAIEVIQAAF (88 aa). Ser898 carries the post-translational modification Phosphoserine. A Phosphoserine; by GSK3-beta; in vitro modification is found at Ser912. Ser928 carries the phosphoserine modification. Phosphoserine; by IKKB occurs at positions 932 and 937. Phosphoserine is present on Ser942. Thr948 bears the Phosphothreonine mark.

As to quaternary structure, component of the NF-kappa-B p65-p50 complex. Homodimer; component of the NF-kappa-B p50-p50 complex. Component of the NF-kappa-B p105-p50 complex. Component of the NF-kappa-B p50-c-Rel complex. Component of a complex consisting of the NF-kappa-B p50-p50 homodimer and BCL3. Also interacts with MAP3K8. NF-kappa-B p50 subunit interacts with NCOA3 coactivator, which may coactivate NF-kappa-B dependent expression via its histone acetyltransferase activity. Interacts with TSC22D3; this interaction prevents nuclear translocation and DNA-binding. Interacts with SPAG9 and UNC5CL. NFKB1/p105 interacts with CFLAR; the interaction inhibits p105 processing into p50. NFKB1/p105 forms a ternary complex with MAP3K8 and TNIP2. Interacts with GSK3B; the interaction prevents processing of p105 to p50. NFKB1/p50 interacts with NFKBIE. NFKB1/p50 interacts with NFKBIZ. Nuclear factor NF-kappa-B p50 subunit interacts with NFKBID. Directly interacts with MEN1. Interacts with HIF1AN. Interacts with FEM1A; interaction is direct. In terms of processing, generation of the NF-kappa-B p50 (Nuclear factor NF-kappa-B p50 subunit) transcription factor takes place both cotranslationally and post-translationally via non-mutually exclusive mechanisms. A cotranslational processing allows the production of both p50 and p105 (Nuclear factor NF-kappa-B p105 subunit) from a single NFKB1 mRNA. While translation occurs, the particular unfolded structure after the GRR repeat region acts as a substrate for the proteasome, promoting degradation of the C-terminus. The GRR acts as a proteasomal 'stop signal', protecting the region upstream of the GRR from degradation and promoting generation of p50. It is unclear if limited proteasome degradation during cotranslational processing depends on ubiquitination. NF-kappa-B p50 is also generated post-translationally following ubiquitination by the KPC complex, leading to limited processing by the proteasome downstream of the GRR region, thereby generating p50. Post-translationally, phosphorylation at the C-terminus by IKBKB/IKKB acts as a signal for ubiquitination and promotes either complete degradation or processing to generate the NF-kappa-B p50 (Nuclear factor NF-kappa-B p50 subunit). Phosphorylation at Ser-912 primes p105 for proteolytic processing in response to TNF-alpha stimulation. Phosphorylation at Ser-928, Ser-932 and Ser-937 are required for BTRC/BTRCP-mediated ubiquitination and proteolysis. Phosphorylation at Ser-932 is also required for ubiquitination by the KPC complex and limited processing to generate NF-kappa-B p50 (Nuclear factor NF-kappa-B p50 subunit). Polyubiquitinated at multiple Lys residues in the C-terminus. Polyubiquitinated by the SCF(FBXW11) and SCF(BTRC) complexes following phosphorylation at Ser-928, Ser-932 and Ser-937, leading to its complete degradation. In contrast, polyubiquitination by the KPC complex following phosphorylation at Ser-932 leads to limited proteosomal processing and generation of the active NF-kappa-B p50 (Nuclear factor NF-kappa-B p50 subunit). In terms of processing, S-nitrosylation of Cys-60 affects DNA binding. Post-translationally, the covalent modification of cysteine by 15-deoxy-Delta12,14-prostaglandin-J2 is autocatalytic and reversible. It may occur as an alternative to other cysteine modifications, such as S-nitrosylation and S-palmitoylation.

The protein resides in the cytoplasm. It localises to the nucleus. Functionally, NF-kappa-B is a pleiotropic transcription factor present in almost all cell types and is the endpoint of a series of signal transduction events that are initiated by a vast array of stimuli related to many biological processes such as inflammation, immunity, differentiation, cell growth, tumorigenesis and apoptosis. NF-kappa-B is a homo- or heterodimeric complex formed by the Rel-like domain-containing proteins RELA/p65, RELB, NFKB1/p105, NFKB1/p50, REL and NFKB2/p52 and the heterodimeric p65-p50 complex appears to be most abundant one. The dimers bind at kappa-B sites in the DNA of their target genes and the individual dimers have distinct preferences for different kappa-B sites that they can bind with distinguishable affinity and specificity. Different dimer combinations act as transcriptional activators or repressors, respectively. NF-kappa-B is controlled by various mechanisms of post-translational modification and subcellular compartmentalization as well as by interactions with other cofactors or corepressors. NF-kappa-B complexes are held in the cytoplasm in an inactive state complexed with members of the NF-kappa-B inhibitor (I-kappa-B) family. In a conventional activation pathway, I-kappa-B is phosphorylated by I-kappa-B kinases (IKKs) in response to different activators, subsequently degraded thus liberating the active NF-kappa-B complex which translocates to the nucleus. NF-kappa-B heterodimeric p65-p50 and RelB-p50 complexes are transcriptional activators. The NF-kappa-B p50-p50 homodimer is a transcriptional repressor, but can act as a transcriptional activator when associated with BCL3. NFKB1 appears to have dual functions such as cytoplasmic retention of attached NF-kappa-B proteins by p105 and generation of p50 by a cotranslational processing. The proteasome-mediated process ensures the production of both p50 and p105 and preserves their independent function, although processing of NFKB1/p105 also appears to occur post-translationally. p50 binds to the kappa-B consensus sequence 5'-GGRNNYYCC-3', located in the enhancer region of genes involved in immune response and acute phase reactions. In a complex with MAP3K8, NFKB1/p105 represses MAP3K8-induced MAPK signaling; active MAP3K8 is released by proteasome-dependent degradation of NFKB1/p105. In terms of biological role, P105 is the precursor of the active p50 subunit (Nuclear factor NF-kappa-B p50 subunit) of the nuclear factor NF-kappa-B. Acts as a cytoplasmic retention of attached NF-kappa-B proteins by p105. Its function is as follows. Constitutes the active form, which associates with RELA/p65 to form the NF-kappa-B p65-p50 complex to form a transcription factor. Together with RELA/p65, binds to the kappa-B consensus sequence 5'-GGRNNYYCC-3', located in the enhancer region of genes involved in immune response and acute phase reactions. The protein is Nuclear factor NF-kappa-B p105 subunit (Nfkb1) of Rattus norvegicus (Rat).